The following is a 354-amino-acid chain: Alkanal monooxygenase alpha chain (354 aa).

It belongs to the bacterial luciferase oxidoreductase family. As to quaternary structure, heterodimer of an alpha and a beta chain.

The enzyme catalyses a long-chain fatty aldehyde + FMNH2 + O2 = a long-chain fatty acid + hnu + FMN + H2O + 2 H(+). Its function is as follows. Light-emitting reaction in luminous bacteria. The sequence is that of Alkanal monooxygenase alpha chain (luxA) from Aliivibrio fischeri (Vibrio fischeri).